We begin with the raw amino-acid sequence, 420 residues long: uncharacterized protein (420 aa).

The TRAM domain maps to 7–65; the sequence is NIERGSVINVEILNAAHGGQGIAKYDGRVIFVKGAFPGDRLSANITHVKKKFARATIAS. Positions 245, 280, 304, and 349 each coordinate S-adenosyl-L-methionine. The active-site Nucleophile is Cys376.

It belongs to the class I-like SAM-binding methyltransferase superfamily. RNA M5U methyltransferase family.

This is an uncharacterized protein from Corynebacterium diphtheriae (strain ATCC 700971 / NCTC 13129 / Biotype gravis).